We begin with the raw amino-acid sequence, 28 residues long: M-poneritoxin-Dq4b/U1-poneritoxin-Dq4c/U1-poneritoxin-Dq4d (28 aa).

M20 carries the methionine sulfoxide; in form U1-PONTX-Dq4d modification. Residue A28 is modified to Alanine amide; in form Dq-1362 and U1-PONTX-Dq4d.

In terms of processing, occurs in 3 forms, M-PONTX-Dq4b has an amidated Ala-28, U1-PONTX-Dq4d has an amidated Ala-28 and an oxidized Met-20, U1-PONTX-Dq4c has no modifications at either Met-20 or Ala-28. As to expression, expressed by the venom gland.

Its subcellular location is the secreted. M-poneritoxin-Dq4b: this synthetic peptide has antimicrobial activity against Gram-positive bacteria B.amyloliquefacies S499 (MIC=0.1 mM), L.monocytogenes 2231 and S.aureus ATCC 29213, against Gram-negative bacteria P.putida BTP1, P.aeruginosa PaO1 and E.coli ATCC 10536, and against the fungi S.cerevisiae, R.mucilaginosa and C.cucumerinum. Not active against the fungi F.oxysporum and B.cinerea. The sequence is that of M-poneritoxin-Dq4b/U1-poneritoxin-Dq4c/U1-poneritoxin-Dq4d from Dinoponera quadriceps (South American ant).